The primary structure comprises 562 residues: MTDKHPRPHSSQVVDGMERAPSRAMLHAVGFADADFAKPQIGIASTWAMVTPCNMHINKLAEDAARGVDGGGGKAVIFNTITISDGISMGTEGMKYSLVSREVIADSIETVVACQGYDGVVAIGGCDKNMPGCLIALARLNRPAVFVYGGTILPGCHDGKKLDVVSVFEAVGARANHRIDDAELHAIESNAIPGPGSCGGMYTANTMASAIEALGMSLPGSSAQVAISRAKELDCERAGAQVLKLLDLGLKPRDIMTKKAFENAITVVIALGGSTNAVLHLLAMANACGVDLKLDDFTRIGRKVPMLADLKPSGRYSMAELVEIGGIQPLMKTLLDAGLLHGDCMTVTGKTLEENLADAPDYPAGQDMIRSLDNPIKKDSHLVILKGNLAPEGAVAKITGKEGLSFTGTARVFDCEEAALTAILDGTIVKGDVIVIRYEGPKGGPGMREMLSPTSAVMGKGLGKEVALITDGRFSGGTHGFVVGHITPEAYTGGPLAIVRDGDTITIDAETRELSLHVTDDEIGRRLAQWTQPAPRYTKGVLAKYARLVSPASEGAVTDDGL.

Cysteine 53 contacts [2Fe-2S] cluster. Aspartate 85 is a Mg(2+) binding site. [2Fe-2S] cluster is bound at residue cysteine 126. Mg(2+) is bound by residues aspartate 127 and lysine 128. N6-carboxylysine is present on lysine 128. Cysteine 198 contributes to the [2Fe-2S] cluster binding site. Glutamate 449 lines the Mg(2+) pocket. Residue serine 475 is the Proton acceptor of the active site.

It belongs to the IlvD/Edd family. In terms of assembly, homodimer. [2Fe-2S] cluster is required as a cofactor. Requires Mg(2+) as cofactor.

The enzyme catalyses (2R)-2,3-dihydroxy-3-methylbutanoate = 3-methyl-2-oxobutanoate + H2O. It carries out the reaction (2R,3R)-2,3-dihydroxy-3-methylpentanoate = (S)-3-methyl-2-oxopentanoate + H2O. Its pathway is amino-acid biosynthesis; L-isoleucine biosynthesis; L-isoleucine from 2-oxobutanoate: step 3/4. The protein operates within amino-acid biosynthesis; L-valine biosynthesis; L-valine from pyruvate: step 3/4. In terms of biological role, functions in the biosynthesis of branched-chain amino acids. Catalyzes the dehydration of (2R,3R)-2,3-dihydroxy-3-methylpentanoate (2,3-dihydroxy-3-methylvalerate) into 2-oxo-3-methylpentanoate (2-oxo-3-methylvalerate) and of (2R)-2,3-dihydroxy-3-methylbutanoate (2,3-dihydroxyisovalerate) into 2-oxo-3-methylbutanoate (2-oxoisovalerate), the penultimate precursor to L-isoleucine and L-valine, respectively. This is Dihydroxy-acid dehydratase from Methylococcus capsulatus (strain ATCC 33009 / NCIMB 11132 / Bath).